A 452-amino-acid polypeptide reads, in one-letter code: mRNA export factor ICP27 homolog (452 aa).

Residues 42-164 (EAIGSTPGED…RNDQTHDESY (123 aa)) are disordered. Positions 98–107 (SNHHGGRDVE) are enriched in basic and acidic residues. Positions 129-144 (SRKHRDRSLSNRRRRP) are enriched in basic residues. Residues 154 to 164 (ERNDQTHDESY) show a composition bias toward basic and acidic residues. C335, H417, C421, and C426 together coordinate Zn(2+). Residues 335–426 (CLLLNRDNDL…HQRECGRVEC (92 aa)) form a CHC2-type zinc finger.

It belongs to the HHV-1 ICP27 protein family. In terms of assembly, homodimer. Homodimerization is required for transactivation. Associates in a complex with RNA, and host export factors NXF1/TAP and ALYREF; these interactions allow nuclear export of viral transcripts. Interacts with three host shuttling SR proteins SRSF1, SRSF3 and SRSF7. Interacts with host SRPK1. Interacts with IE62; this interaction enhances IE62 transactivation. Phosphorylated in vitro by SRPK1.

The protein resides in the host cytoplasm. Its subcellular location is the host nucleus. Its function is as follows. Multifunctional regulator of the expression of viral genes that mediates nuclear export of viral intronless mRNAs. This immediate early (EI) protein promotes the nuclear export of viral intronless mRNAs by interacting with mRNAs and host NXF1/TAP. In Varicella-zoster virus (strain Dumas) (HHV-3), this protein is mRNA export factor ICP27 homolog.